Reading from the N-terminus, the 459-residue chain is Argininosuccinate lyase (459 aa).

It belongs to the lyase 1 family. Argininosuccinate lyase subfamily.

Its subcellular location is the cytoplasm. It carries out the reaction 2-(N(omega)-L-arginino)succinate = fumarate + L-arginine. It participates in amino-acid biosynthesis; L-arginine biosynthesis; L-arginine from L-ornithine and carbamoyl phosphate: step 3/3. This chain is Argininosuccinate lyase, found in Lactococcus lactis subsp. cremoris (strain SK11).